A 471-amino-acid polypeptide reads, in one-letter code: BPI fold-containing family B member 1 (471 aa).

The signal sequence occupies residues 1 to 18; the sequence is MTNPWIVSLLLGATLVQA. Residues Asn-150, Asn-157, Asn-260, and Asn-397 are each glycosylated (N-linked (GlcNAc...) asparagine). A disulfide bridge links Cys-154 with Cys-197.

Belongs to the BPI/LBP/Plunc superfamily. Plunc family.

It is found in the secreted. In terms of biological role, may play a role in innate immunity in mouth, nose and lungs. Binds bacterial lipopolysaccharide (LPS) and modulates the cellular responses to LPS. In Rattus norvegicus (Rat), this protein is BPI fold-containing family B member 1 (Bpifb1).